The following is an 83-amino-acid chain: Small ribosomal subunit protein eS21 (83 aa).

An N-acetylmethionine modification is found at Met-1. Lys-81 bears the N6-acetyllysine mark.

The protein belongs to the eukaryotic ribosomal protein eS21 family. In terms of assembly, component of the 40S small ribosomal subunit.

It localises to the cytoplasm. The protein resides in the cytosol. The protein localises to the rough endoplasmic reticulum. In terms of biological role, component of the small ribosomal subunit. The ribosome is a large ribonucleoprotein complex responsible for the synthesis of proteins in the cell. The protein is Small ribosomal subunit protein eS21 (Rps21) of Mus musculus (Mouse).